A 95-amino-acid polypeptide reads, in one-letter code: Large ribosomal subunit protein eL37x (95 aa).

4 residues coordinate Zn(2+): C19, C22, C34, and C37. The C4-type zinc finger occupies 19 to 37; it reads CVRCGRRSFHIQKSRCSAC. Residues 73-95 are disordered; the sequence is RFKTGFREGTEAKPRSKASASSA. The span at 77–86 shows a compositional bias: basic and acidic residues; sequence GFREGTEAKP.

This sequence belongs to the eukaryotic ribosomal protein eL37 family. Zn(2+) serves as cofactor.

Its function is as follows. Binds to the 23S rRNA. This is Large ribosomal subunit protein eL37x (RPL37C) from Arabidopsis thaliana (Mouse-ear cress).